The sequence spans 320 residues: o-succinylbenzoate synthase (320 aa).

Lys-133 (proton donor) is an active-site residue. Mg(2+) contacts are provided by Asp-161, Glu-190, and Asp-213. Lys-235 serves as the catalytic Proton acceptor.

This sequence belongs to the mandelate racemase/muconate lactonizing enzyme family. MenC type 1 subfamily. The cofactor is a divalent metal cation.

It catalyses the reaction (1R,6R)-6-hydroxy-2-succinyl-cyclohexa-2,4-diene-1-carboxylate = 2-succinylbenzoate + H2O. The protein operates within quinol/quinone metabolism; 1,4-dihydroxy-2-naphthoate biosynthesis; 1,4-dihydroxy-2-naphthoate from chorismate: step 4/7. It participates in quinol/quinone metabolism; menaquinone biosynthesis. Functionally, converts 2-succinyl-6-hydroxy-2,4-cyclohexadiene-1-carboxylate (SHCHC) to 2-succinylbenzoate (OSB). The chain is o-succinylbenzoate synthase from Escherichia fergusonii (strain ATCC 35469 / DSM 13698 / CCUG 18766 / IAM 14443 / JCM 21226 / LMG 7866 / NBRC 102419 / NCTC 12128 / CDC 0568-73).